The following is an 88-amino-acid chain: Large ribosomal subunit protein bL27 (88 aa).

The segment at 1–21 (MAHKKGASSSRNGRDSNAQRL) is disordered. Over residues 7 to 19 (ASSSRNGRDSNAQ) the composition is skewed to polar residues.

The protein belongs to the bacterial ribosomal protein bL27 family.

The protein is Large ribosomal subunit protein bL27 of Frankia casuarinae (strain DSM 45818 / CECT 9043 / HFP020203 / CcI3).